Reading from the N-terminus, the 355-residue chain is DnaJ homolog dnj-20 (355 aa).

The signal sequence occupies residues 1 to 21 (MRILNVSLLVLASSLVAFVEC). The 66-residue stretch at 24–89 (DFYKILGVAK…EKRAMYDRHG (66 aa)) folds into the J domain.

This chain is DnaJ homolog dnj-20, found in Caenorhabditis elegans.